Here is a 190-residue protein sequence, read N- to C-terminus: Probable chorismate pyruvate-lyase (190 aa).

Residues Arg-74, Leu-112, and Glu-173 each coordinate substrate.

This sequence belongs to the UbiC family.

It localises to the cytoplasm. The catalysed reaction is chorismate = 4-hydroxybenzoate + pyruvate. It functions in the pathway cofactor biosynthesis; ubiquinone biosynthesis. Functionally, removes the pyruvyl group from chorismate, with concomitant aromatization of the ring, to provide 4-hydroxybenzoate (4HB) for the ubiquinone pathway. The protein is Probable chorismate pyruvate-lyase of Bordetella bronchiseptica (strain ATCC BAA-588 / NCTC 13252 / RB50) (Alcaligenes bronchisepticus).